Here is an 88-residue protein sequence, read N- to C-terminus: UPF0335 protein MexAM1_META1p2947 (88 aa).

Belongs to the UPF0335 family.

This chain is UPF0335 protein MexAM1_META1p2947, found in Methylorubrum extorquens (strain ATCC 14718 / DSM 1338 / JCM 2805 / NCIMB 9133 / AM1) (Methylobacterium extorquens).